Reading from the N-terminus, the 199-residue chain is Transgelin-3 (199 aa).

The region spanning 24–136 (ADLENKLVDW…RTLMALGSVA (113 aa)) is the Calponin-homology (CH) domain. Position 163 is a phosphoserine (Ser-163). A Calponin-like repeat occupies 174-199 (IGLQMGSNKGASQAGMTGYGMPRQIM). A compositionally biased stretch (polar residues) spans 178 to 188 (MGSNKGASQAG). Positions 178–199 (MGSNKGASQAGMTGYGMPRQIM) are disordered.

Belongs to the calponin family. Abundant and ubiquitous expression in neurons.

The sequence is that of Transgelin-3 (Tagln3) from Rattus norvegicus (Rat).